A 131-amino-acid chain; its full sequence is Small ribosomal subunit protein uS8 (131 aa).

It belongs to the universal ribosomal protein uS8 family. In terms of assembly, part of the 30S ribosomal subunit. Contacts proteins S5 and S12.

Its function is as follows. One of the primary rRNA binding proteins, it binds directly to 16S rRNA central domain where it helps coordinate assembly of the platform of the 30S subunit. This Solibacter usitatus (strain Ellin6076) protein is Small ribosomal subunit protein uS8.